The primary structure comprises 112 residues: cAMP-regulated phosphoprotein 19 (112 aa).

An N-acetylmethionine modification is found at M1. The segment covering 1–11 (MSAEVPEAASA) has biased composition (low complexity). The interval 1–49 (MSAEVPEAASAEEQKEMEDKVTSPEKAEEAKLKARYPHLGQKPGGSDFL) is disordered. At S2 the chain carries N-acetylserine. Residues S2 and S23 each carry the phosphoserine modification. A compositionally biased stretch (basic and acidic residues) spans 12-32 (EEQKEMEDKVTSPEKAEEAKL). S62 and S104 each carry phosphoserine; by GWL. The segment at 74–112 (NKQLPAAAPDKTEVTGDHIPTPQDLPQRKPSLVASKLAG) is disordered. Position 104 is a phosphoserine; by PKA (S104). K109 carries the post-translational modification N6-acetyllysine.

The protein belongs to the endosulfine family. As to quaternary structure, interacts (when phosphorylated at Ser-62) with PPP2R2D. Interacts with SNCA. Interacts with PPP2R2A; the interaction is direct and this interaction inhibits PP2A activity. Post-translationally, phosphorylation at Ser-62 by MASTL/GWL during mitosis is essential for interaction with PPP2R2D (PR55-delta) and subsequent inactivation of PP2A. Phosphorylated by PKA.

It localises to the cytoplasm. In terms of biological role, protein phosphatase inhibitor that specifically inhibits protein phosphatase 2A (PP2A) during mitosis. Inhibition of PP2A is enhanced when ARPP19 is phosphorylated. When phosphorylated at Ser-62 during mitosis, specifically interacts with PPP2R2D (PR55-delta) and inhibits its activity, leading to inactivation of PP2A, an essential condition to keep cyclin-B1-CDK1 activity high during M phase. May indirectly enhance GAP-43 expression by binding to the NGF-regulatory region of its mRNA. This Mus musculus (Mouse) protein is cAMP-regulated phosphoprotein 19 (Arpp19).